The chain runs to 402 residues: Putative polyketide beta-ketoacyl synthase 2 (402 aa).

Disordered stretches follow at residues 1-30 and 188-222; these read MTPVAVTGMGIAAPNGLGRPTTGRPPWAPR and VEPRSAPGAGSPSSPAGGMSDSDEPNRAYLPFDRD. A Ketosynthase family 3 (KS3) domain is found at 1 to 400; sequence MTPVAVTGMG…GFNSALVVRA (400 aa). Positions 192–205 are enriched in low complexity; that stretch reads SAPGAGSPSSPAGG.

Belongs to the thiolase-like superfamily. Beta-ketoacyl-ACP synthases family.

Its pathway is antifungal biosynthesis; monensin biosynthesis. The polypeptide is Putative polyketide beta-ketoacyl synthase 2 (Streptomyces virginiae (Streptomyces cinnamonensis)).